The following is a 135-amino-acid chain: Transcriptional activator protein (135 aa).

Positions 17 to 32 (KVQHKIAKKKPIRRKR) match the Nuclear localization signal motif. A zinc finger spans residues 37–54 (CGCSYYLHLNCNNHGFTH). Polar residues-rich tracts occupy residues 77-87 (LFQDNRTQPEA) and 101-115 (IQPQHQEGNGDSQMF). The disordered stretch occupies residues 77 to 117 (LFQDNRTQPEAISNEPRHHFHSDKIQPQHQEGNGDSQMFSR). Residues 120–135 (NLDDITASDWSFLKSI) are transactivation.

Belongs to the geminiviridae transcriptional activator protein family. Monomer. Homodimer. Homooligomer. Self-interaction correlates with nuclear localization and efficient activation of transcription. Monomers suppress local silencing by interacting with and inactivating host adenosine kinase 2 (ADK2) in the cytoplasm. Interacts with and inhibits host SNF1 kinase. Binds to ssDNA. May interact with host RPS27A. Phosphorylated.

Its subcellular location is the host nucleus. It localises to the host cytoplasm. Functionally, multifunctional protein that modulates host antiviral defenses and promotes host attractiveness to insect vectors. Acts as a suppressor of RNA-mediated gene silencing, also known as post-transcriptional gene silencing (PTGS), a mechanism of plant viral defense that limits the accumulation of viral RNAs. TrAP suppresses the host RNA silencing by inhibiting adenosine kinase 2 (ADK2), a kinase involved in a general methylation pathway. Also suppresses the host basal defense by interacting with and inhibiting SNF1 kinase, a key regulator of cell metabolism implicated in innate antiviral defense. Its function is as follows. Inhibits signal transduction by the phytohormone jasmonate, making the infected plant more attractive to aphids, which are the second host to play a role as a dissemination vector. Acts by binding to ubiquitin precursor RPS27A, thereby preventing ubiquitin degradation of JAZ. This chain is Transcriptional activator protein, found in Tomato yellow leaf curl virus (strain Israel) (TYLCV).